Consider the following 334-residue polypeptide: D-alanine--D-alanine ligase (334 aa).

The 205-residue stretch at 111-315 (KRVCLSHGVP…YEDLCIEILR (205 aa)) folds into the ATP-grasp domain. 141–196 (AAEFGLPLMLKAPHEGSTIGIAKVETAEGMQAGFDLCAKYEAVVLVEQFVKGRELT) provides a ligand contact to ATP. Positions 268, 282, and 284 each coordinate Mg(2+).

This sequence belongs to the D-alanine--D-alanine ligase family. The cofactor is Mg(2+). Mn(2+) is required as a cofactor.

It localises to the cytoplasm. It carries out the reaction 2 D-alanine + ATP = D-alanyl-D-alanine + ADP + phosphate + H(+). The protein operates within cell wall biogenesis; peptidoglycan biosynthesis. Functionally, cell wall formation. In Herminiimonas arsenicoxydans, this protein is D-alanine--D-alanine ligase.